A 321-amino-acid chain; its full sequence is Transcriptional activator protein Pur-alpha (321 aa).

The segment at 1–54 (MADRDSGSEQGGAALGSGGSLGHPGSGSGSGGGGGGGGGGGGSGGGGGAPGGLQ) is disordered. The residue at position 2 (alanine 2) is an N-acetylalanine. Gly residues predominate over residues 9 to 51 (EQGGAALGSGGSLGHPGSGSGSGGGGGGGGGGGGSGGGGGAPG). Serine 181 bears the Phosphoserine mark. The span at 294 to 313 (LHQQQQQQQEETTAATLLLQ) shows a compositional bias: low complexity. The tract at residues 294–321 (LHQQQQQQQEETTAATLLLQGEEEGEED) is disordered.

This sequence belongs to the PUR DNA-binding protein family. In terms of assembly, homodimer, heterodimer with PURB and heterotrimer with PURB and YBX1/Y-box protein 1. Interacts with FMR1; this interaction occurs in association with polyribosome.

The protein localises to the nucleus. Its function is as follows. This is a probable transcription activator that specifically binds the purine-rich single strand of the PUR element located upstream of the c-Myc gene. May play a role in the initiation of DNA replication and in recombination. This chain is Transcriptional activator protein Pur-alpha (Pura), found in Mus musculus (Mouse).